We begin with the raw amino-acid sequence, 224 residues long: UPF0111 protein CT_691 (224 aa).

It belongs to the UPF0111 family.

This Chlamydia trachomatis serovar D (strain ATCC VR-885 / DSM 19411 / UW-3/Cx) protein is UPF0111 protein CT_691.